The following is a 501-amino-acid chain: MAQALPWLLLWMGSGVLPAHGSQPGIRLPLRSGLGGAPLGLRLPRETDEESEEPGRRGSFVEMVDNLRGKSGQGYYVEMTLGSPPQTLNILVDTGSSNFAVGAAPHPFLHRYYQRQLSSTYRDLRKGVYVPYTQGKWEGELGTDLVSIPHGPNVTVRANIAAITESDKFFINGSNWEGILGLAYAEIARPDDSLEPFFDSLVKQTHVPNLFSLQLCGAGFPLNQSEALASVGGSMIIGGIDHSLYMGSLWYTPIRREWYYEVIIVRVEINGQDLKMDCKEYNYDKSIVDSGTTNLRLPKKVFEAAVKSIKAASSTEKFPDGFWLGEQLVCWQAGTTPWNIFPVISLYLMGEVTNQSFRITILPQQYLRPVEDVATSQDDCYKFAISQSSTGTVMGAVIMEGFYVVFDRARKRIGFAVSACHVHDEFRTAAVEGPFVTPDMEDCGYNIPQTDESTLMTIAYVMAAICALFMLPLCLMVCQWRCLRCLRHQHDDFADDISLLK.

The N-terminal stretch at 1-21 is a signal peptide; it reads MAQALPWLLLWMGSGVLPAHG. The propeptide occupies 22–45; that stretch reads SQPGIRLPLRSGLGGAPLGLRLPR. The Extracellular segment spans residues 22–457; it reads SQPGIRLPLR…PQTDESTLMT (436 aa). The tract at residues 39–58 is disordered; that stretch reads LGLRLPRETDEESEEPGRRG. Positions 75-416 constitute a Peptidase A1 domain; it reads YYVEMTLGSP…DRARKRIGFA (342 aa). Residue Asp-93 is part of the active site. Lys-126 carries the N6-acetyllysine modification. N-linked (GlcNAc...) asparagine glycans are attached at residues Asn-153, Asn-172, and Asn-223. 3 disulfides stabilise this stretch: Cys-216-Cys-420, Cys-278-Cys-443, and Cys-330-Cys-380. N6-acetyllysine occurs at positions 275, 279, and 285. Residue Asp-289 is part of the active site. Residues Lys-299, Lys-300, and Lys-307 each carry the N6-acetyllysine modification. Asn-354 carries an N-linked (GlcNAc...) asparagine glycan. Residues 458 to 478 traverse the membrane as a helical segment; it reads IAYVMAAICALFMLPLCLMVC. 4 S-palmitoyl cysteine lipidation sites follow: Cys-474, Cys-478, Cys-482, and Cys-485. Over 479 to 501 the chain is Cytoplasmic; the sequence is QWRCLRCLRHQHDDFADDISLLK. The segment at 479-501 is interaction with RTN3; it reads QWRCLRCLRHQHDDFADDISLLK. The short motif at 496 to 500 is the DXXLL element; it reads DISLL. Ser-498 is subject to Phosphoserine. Residue Lys-501 forms a Glycyl lysine isopeptide (Lys-Gly) (interchain with G-Cter in ubiquitin) linkage.

This sequence belongs to the peptidase A1 family. In terms of assembly, monomer. Interacts (via DXXLL motif) with GGA1, GGA2 and GGA3 (via their VHS domain); the interaction highly increases when BACE1 is phosphorylated at Ser-498. Interacts with RTN1; RTN2; RTN3 and RTN4; the interaction leads to inhibition of amyloid precursor protein processing. Interacts with SNX6. Interacts with PCSK9. Interacts with NAT8 and NAT8B. Interacts with BIN1. Interacts (via extracellular domain) with ADAM10 (via extracellular domain). Interacts with SORL1; this interaction may affect binding with APP and hence reduce APP cleavage. Interacts with NRDC AND NRG1. Palmitoylation mediates lipid raft localization. Post-translationally, acetylated in the endoplasmic reticulum at Lys-126, Lys-275, Lys-279, Lys-285, Lys-299, Lys-300 and Lys-307. Acetylation by NAT8 and NAT8B is transient and deacetylation probably occurs in the Golgi. Acetylation regulates the maturation, the transport to the plasma membrane, the stability and the expression of the protein. In terms of processing, ubiquitinated at Lys-501, ubiquitination leads to lysosomal degradation. Monoubiquitinated and 'Lys-63'-linked polyubitinated. Deubiquitnated by USP8; inhibits lysosomal degradation. Phosphorylation at Ser-498 is required for interaction with GGA1 and retrograded transport from endosomal compartments to the trans-Golgi network. Non-phosphorylated BACE1 enters a direct recycling route to the cell surface. Post-translationally, N-Glycosylated. Addition of a bisecting N-acetylglucosamine by MGAT3 blocks lysosomal targeting, further degradation and is required for maintaining stability under stress conditions.

The protein localises to the cell membrane. It localises to the golgi apparatus. The protein resides in the trans-Golgi network. Its subcellular location is the endoplasmic reticulum. It is found in the endosome. The protein localises to the cell surface. It localises to the cytoplasmic vesicle membrane. The protein resides in the membrane raft. Its subcellular location is the lysosome. It is found in the late endosome. The protein localises to the early endosome. It localises to the recycling endosome. The protein resides in the cell projection. Its subcellular location is the axon. It is found in the dendrite. The catalysed reaction is Broad endopeptidase specificity. Cleaves Glu-Val-Asn-Leu-|-Asp-Ala-Glu-Phe in the Swedish variant of Alzheimer's amyloid precursor protein.. Its activity is regulated as follows. Inhibited by RTN3 and RTN4. Functionally, responsible for the proteolytic processing of the amyloid precursor protein (APP). Cleaves at the N-terminus of the A-beta peptide sequence, between residues 671 and 672 of APP, leads to the generation and extracellular release of beta-cleaved soluble APP, and a corresponding cell-associated C-terminal fragment which is later released by gamma-secretase. Cleaves CHL1. This is Beta-secretase 1 (BACE1) from Bos taurus (Bovine).